The following is a 279-amino-acid chain: Large ribosomal subunit protein mL46 (279 aa).

An N6-acetyllysine modification is found at Lys-230.

This sequence belongs to the mitochondrion-specific ribosomal protein mL46 family. In terms of assembly, component of the mitochondrial large ribosomal subunit (mt-LSU). Mature mammalian 55S mitochondrial ribosomes consist of a small (28S) and a large (39S) subunit. The 28S small subunit contains a 12S ribosomal RNA (12S mt-rRNA) and 30 different proteins. The 39S large subunit contains a 16S rRNA (16S mt-rRNA), a copy of mitochondrial valine transfer RNA (mt-tRNA(Val)), which plays an integral structural role, and 52 different proteins. mL46 is located at the central protuberance.

The protein resides in the mitochondrion. The protein is Large ribosomal subunit protein mL46 (MRPL46) of Homo sapiens (Human).